Consider the following 122-residue polypeptide: Large ribosomal subunit protein uL14 (122 aa).

The protein belongs to the universal ribosomal protein uL14 family. As to quaternary structure, part of the 50S ribosomal subunit. Forms a cluster with proteins L3 and L19. In the 70S ribosome, L14 and L19 interact and together make contacts with the 16S rRNA in bridges B5 and B8.

In terms of biological role, binds to 23S rRNA. Forms part of two intersubunit bridges in the 70S ribosome. The protein is Large ribosomal subunit protein uL14 of Lachnospira eligens (strain ATCC 27750 / DSM 3376 / VPI C15-48 / C15-B4) (Eubacterium eligens).